The chain runs to 404 residues: 8-amino-7-oxononanoate synthase (404 aa).

Position 20 (R20) interacts with substrate. 116 to 117 contributes to the pyridoxal 5'-phosphate binding site; the sequence is GY. Residue H141 participates in substrate binding. 3 residues coordinate pyridoxal 5'-phosphate: S187, H215, and T243. K246 carries the N6-(pyridoxal phosphate)lysine modification. T366 lines the substrate pocket.

It belongs to the class-II pyridoxal-phosphate-dependent aminotransferase family. BioF subfamily. As to quaternary structure, homodimer. It depends on pyridoxal 5'-phosphate as a cofactor.

It carries out the reaction 6-carboxyhexanoyl-[ACP] + L-alanine + H(+) = (8S)-8-amino-7-oxononanoate + holo-[ACP] + CO2. Its pathway is cofactor biosynthesis; biotin biosynthesis. Functionally, catalyzes the decarboxylative condensation of pimeloyl-[acyl-carrier protein] and L-alanine to produce 8-amino-7-oxononanoate (AON), [acyl-carrier protein], and carbon dioxide. This Cupriavidus taiwanensis (strain DSM 17343 / BCRC 17206 / CCUG 44338 / CIP 107171 / LMG 19424 / R1) (Ralstonia taiwanensis (strain LMG 19424)) protein is 8-amino-7-oxononanoate synthase.